The sequence spans 38 residues: Photosystem II reaction center protein L (38 aa).

The helical transmembrane segment at 17-37 (SLYWGLLLIFVLAVLFSSYIF) threads the bilayer.

This sequence belongs to the PsbL family. In terms of assembly, PSII is composed of 1 copy each of membrane proteins PsbA, PsbB, PsbC, PsbD, PsbE, PsbF, PsbH, PsbI, PsbJ, PsbK, PsbL, PsbM, PsbT, PsbX, PsbY, PsbZ, Psb30/Ycf12, at least 3 peripheral proteins of the oxygen-evolving complex and a large number of cofactors. It forms dimeric complexes.

It localises to the plastid. Its subcellular location is the chloroplast thylakoid membrane. Functionally, one of the components of the core complex of photosystem II (PSII). PSII is a light-driven water:plastoquinone oxidoreductase that uses light energy to abstract electrons from H(2)O, generating O(2) and a proton gradient subsequently used for ATP formation. It consists of a core antenna complex that captures photons, and an electron transfer chain that converts photonic excitation into a charge separation. This subunit is found at the monomer-monomer interface and is required for correct PSII assembly and/or dimerization. The sequence is that of Photosystem II reaction center protein L from Tetradesmus obliquus (Green alga).